A 201-amino-acid polypeptide reads, in one-letter code: Histone chaperone asf1a-A (201 aa).

It belongs to the ASF1 family. In terms of assembly, interacts with histone H3 (including both histone H3.1 and H3.3) and histone H4. Interacts with hira and p60.

It is found in the nucleus. Histone chaperone that facilitates histone deposition and histone exchange and removal during nucleosome assembly and disassembly. Not critical for histone deposition during nucleosome assembly. This is Histone chaperone asf1a-A (asf1aa) from Xenopus laevis (African clawed frog).